A 524-amino-acid chain; its full sequence is Translation initiation factor eIF2B subunit delta (524 aa).

A disordered region spans residues 1–155; that stretch reads MAAVAVAVRE…EHTPADDPTL (155 aa). Ala-2 carries the post-translational modification N-acetylalanine. 2 stretches are compositionally biased toward basic and acidic residues: residues 8–20 and 31–40; these read VREE…KTEL and LTQEEKLQLR. Ser-12 bears the Phosphoserine mark. Basic residues predominate over residues 41-51; the sequence is KEKKQQKKKRK. Thr-86 carries the post-translational modification Phosphothreonine. Basic and acidic residues predominate over residues 96-121; the sequence is SKAELRAERRAKQEAERALKQARKGE. The span at 130–140 shows a compositional bias: polar residues; it reads CPSTAGETTSG. The segment at 171 to 180 is may bind the chemical integrated stress response (ISR) inhibitor ISRIB; that stretch reads RKDYGSKVSL.

It belongs to the eIF-2B alpha/beta/delta subunits family. Component of the translation initiation factor 2B (eIF2B) complex which is a heterodecamer of two sets of five different subunits: alpha, beta, gamma, delta and epsilon. Subunits alpha, beta and delta comprise a regulatory subcomplex and subunits epsilon and gamma comprise a catalytic subcomplex. Within the complex, the hexameric regulatory complex resides at the center, with the two heterodimeric catalytic subcomplexes bound on opposite sides.

The protein localises to the cytoplasm. It is found in the cytosol. Its activity is regulated as follows. Activated by the chemical integrated stress response (ISR) inhibitor ISRIB which stimulates guanine nucleotide exchange factor activity for both phosphorylated and unphosphorylated eIF2. Acts as a component of the translation initiation factor 2B (eIF2B) complex, which catalyzes the exchange of GDP for GTP on eukaryotic initiation factor 2 (eIF2) gamma subunit. Its guanine nucleotide exchange factor activity is repressed when bound to eIF2 complex phosphorylated on the alpha subunit, thereby limiting the amount of methionyl-initiator methionine tRNA available to the ribosome and consequently global translation is repressed. The chain is Translation initiation factor eIF2B subunit delta (Eif2b4) from Mus musculus (Mouse).